Reading from the N-terminus, the 967-residue chain is Vitamin B12-dependent ribonucleotide reductase (967 aa).

Residues Met-1–Leu-23 form a disordered region. Substrate contacts are provided by residues Ser-143, Ala-159–Cys-160, Gly-188, Asn-364–Glu-368, and Pro-554–Ile-558. The cysteines at positions 160 and 377 are disulfide-linked. Asn-364 serves as the catalytic Proton acceptor. Catalysis depends on Cys-366, which acts as the Cysteine radical intermediate. Glu-368 (proton acceptor) is an active-site residue.

The protein belongs to the ribonucleoside diphosphate reductase class-2 family. The cofactor is adenosylcob(III)alamin.

It carries out the reaction a 2'-deoxyribonucleoside 5'-diphosphate + [thioredoxin]-disulfide + H2O = a ribonucleoside 5'-diphosphate + [thioredoxin]-dithiol. Its function is as follows. Catalyzes the reduction of ribonucleotides to deoxyribonucleotides. May function to provide a pool of deoxyribonucleotide precursors for DNA repair during oxygen limitation and/or for immediate growth after restoration of oxygen. In Streptomyces coelicolor (strain ATCC BAA-471 / A3(2) / M145), this protein is Vitamin B12-dependent ribonucleotide reductase (nrdJ).